A 711-amino-acid polypeptide reads, in one-letter code: MLNPIVRKFQYGQHTVTLETGMMARQATAAVMVSMDDTAVFVTVVGQKKAKPGQDFFPLTVNYQERTYAAGKIPGGFFRREGRPSEGETLIARLIDRPVRPLFPEGFVNEVQVIATVVSVNPQVNPDIVAMIGASAALSLSGIPFNGPIGAARVGYINDQYVLNPTQEELKSSKLDLVVAGTEAAVLMVESEAELLSEDQMLGAVVFGHEQQQIVIQNINDLVKEAGKPRWDWQPEAVNEALNARVAALAESRLSDAYRITDKQERYAQVDVIKSETIATLVAEDETLDANELGEILHAIEKNVVRSRVLAGEPRIDGREKDMIRGLDVRTGVLPRTHGSALFTRGETQALVTATLGTARDAQNIDELMGERTDSFLFHYNFPPYSVGETGMVGSPKRREIGHGRLAKRGVLAVMPTIEEFPYTVRVVSEITESNGSSSMASVCGASLALMDAGVPVKAAVAGIAMGLVKEGDNFVVLSDILGDEDHLGDMDFKVAGSRDGISALQMDIKIEGITKEIMQVALNQAKGARLHILGVMEQAINAPRGDISEFAPRIHTIKINPDKIKDVIGKGGSVIRALTEETGTTIEIEDDGTVKIAATDGDKAQHAIRRIEEITAEIEVGRIYNGKVTRIVDFGAFVAIGGGKEGLVHISQIADKRVEKVTDYLQMGQEVPVKVLEVDRQGRVRLSIKEATEQTPSAAAPEAPAAEQGE.

2 residues coordinate Mg(2+): Asp486 and Asp492. In terms of domain architecture, KH spans 553-612 (PRIHTIKINPDKIKDVIGKGGSVIRALTEETGTTIEIEDDGTVKIAATDGDKAQHAIRRI). The S1 motif domain maps to 622 to 690 (GRIYNGKVTR…RQGRVRLSIK (69 aa)). The tract at residues 689-711 (IKEATEQTPSAAAPEAPAAEQGE) is disordered. Low complexity predominate over residues 694–711 (EQTPSAAAPEAPAAEQGE).

Belongs to the polyribonucleotide nucleotidyltransferase family. Component of the RNA degradosome, which is a multiprotein complex involved in RNA processing and mRNA degradation. Mg(2+) serves as cofactor.

Its subcellular location is the cytoplasm. The catalysed reaction is RNA(n+1) + phosphate = RNA(n) + a ribonucleoside 5'-diphosphate. In terms of biological role, involved in mRNA degradation. Catalyzes the phosphorolysis of single-stranded polyribonucleotides processively in the 3'- to 5'-direction. The chain is Polyribonucleotide nucleotidyltransferase from Klebsiella pneumoniae subsp. pneumoniae (strain ATCC 700721 / MGH 78578).